Here is a 158-residue protein sequence, read N- to C-terminus: MATEKTYPMTQEGKQKLENELEDLKTVKRKEVVERIKIARSFGDLSENSEYDAAKDEQAFVEGRITQLENMIRNAVIITDNGEESTVVTLGKTVTFKELPNGDEEAYTIVGSAEADPFEGRISNDSPIAKSLLGKQIGEKVAIQTPGGEMQVEIISVK.

A coiled-coil region spans residues 4 to 75; that stretch reads EKTYPMTQEG…TQLENMIRNA (72 aa).

This sequence belongs to the GreA/GreB family.

Functionally, necessary for efficient RNA polymerase transcription elongation past template-encoded arresting sites. The arresting sites in DNA have the property of trapping a certain fraction of elongating RNA polymerases that pass through, resulting in locked ternary complexes. Cleavage of the nascent transcript by cleavage factors such as GreA or GreB allows the resumption of elongation from the new 3'terminus. GreA releases sequences of 2 to 3 nucleotides. The polypeptide is Transcription elongation factor GreA (Bacillus anthracis (strain A0248)).